A 760-amino-acid polypeptide reads, in one-letter code: BMP/retinoic acid-inducible neural-specific protein 1 (760 aa).

Positions 1–16 (MNWRFVELLYFLFVWG) are cleaved as a signal peptide. The region spanning 68 to 251 (RYKIYREFAR…FVQSALSYIM (184 aa)) is the MACPF domain. 7 N-linked (GlcNAc...) asparagine glycosylation sites follow: Asn-156, Asn-433, Asn-443, Asn-553, Asn-599, Asn-630, and Asn-676.

The protein belongs to the BRINP family. In terms of tissue distribution, expressed in brain. Expressed in GABAergic neurons of the pre-frontal cortex. Weakly expressed in embryonic stem (ES) cells and in ES-derived neural stem cells (NSCs).

It localises to the cytoplasm. Plays a role in neurogenesis, brain development, and the functioning of GABAergic neurons. May suppress cell cycle progression in postmitotic neurons by inhibiting G1/S transition. The polypeptide is BMP/retinoic acid-inducible neural-specific protein 1 (Brinp1) (Mus musculus (Mouse)).